The primary structure comprises 363 residues: Phospho-N-acetylmuramoyl-pentapeptide-transferase (363 aa).

A run of 11 helical transmembrane segments spans residues 4–24 (NLLVSHINSCYIFSIFYNVIV), 28–48 (IAILLSFSISFSLIPILIKYF), 72–92 (TPTMGGIAIIFSIIISTLMLA), 96–116 (NIYVLTTIFGMLSLAILGLID), 129–149 (INATCKLISQIMVSIICCMIV), 169–189 (LTIDLSIFYIPFALFIIIGSS), 200–220 (GLVTVPIIIVSFCLGLMCYLA), 241–261 (ELTVLCSAIIGASLGFLWYNI), 266–286 (IFMGDVGSLSLGGAIGIISVI), 294–314 (GIIGGLFVIEALSAIIQIYSI), and 342–362 (IVSRFWLLSIIFSLIGLSSLI).

It belongs to the glycosyltransferase 4 family. MraY subfamily. Mg(2+) is required as a cofactor.

Its subcellular location is the cell inner membrane. The enzyme catalyses UDP-N-acetyl-alpha-D-muramoyl-L-alanyl-gamma-D-glutamyl-meso-2,6-diaminopimeloyl-D-alanyl-D-alanine + di-trans,octa-cis-undecaprenyl phosphate = di-trans,octa-cis-undecaprenyl diphospho-N-acetyl-alpha-D-muramoyl-L-alanyl-D-glutamyl-meso-2,6-diaminopimeloyl-D-alanyl-D-alanine + UMP. It functions in the pathway cell wall biogenesis; peptidoglycan biosynthesis. Catalyzes the initial step of the lipid cycle reactions in the biosynthesis of the cell wall peptidoglycan: transfers peptidoglycan precursor phospho-MurNAc-pentapeptide from UDP-MurNAc-pentapeptide onto the lipid carrier undecaprenyl phosphate, yielding undecaprenyl-pyrophosphoryl-MurNAc-pentapeptide, known as lipid I. The protein is Phospho-N-acetylmuramoyl-pentapeptide-transferase of Orientia tsutsugamushi (strain Ikeda) (Rickettsia tsutsugamushi).